Reading from the N-terminus, the 559-residue chain is 3-aminoavenalumate diazotase (559 aa).

Ser181 contacts Mg(2+). Ala227, Gly332, and Ser336 together coordinate ATP. Glu337 is a Mg(2+) binding site. Residues Asp416 and Arg437 each contribute to the ATP site.

The protein belongs to the ATP-dependent AMP-binding enzyme family. The cofactor is Mg(2+).

The catalysed reaction is 3-aminoavenalumate + nitrite + ATP = 3-diazoavenalumate + AMP + diphosphate + H2O. The enzyme catalyses (E)-3-aminocoumarate + nitrite + ATP + H(+) = (E)-3-diazocoumarate + AMP + diphosphate + H2O. It carries out the reaction 3-amino-4-hydroxybenzoate + nitrite + ATP + H(+) = 3-diazo-4-hydroxybenzoate + AMP + diphosphate + H2O. Its function is as follows. Ligase involved in the biosynthesis of avenalumic acid (AVA). Catalyzes the diazotization of 3-aminoavenalumic acid (3-AAA) to 3-diazoavenalumic acid (3-DAA). It can also act on 3-aminocoumaric acid (3-ACA) and 3-amino-4-hydroxybenzoic acid (3,4-AHBA) with lower activity. This is 3-aminoavenalumate diazotase from Streptomyces sp.